We begin with the raw amino-acid sequence, 342 residues long: Anthranilate phosphoribosyltransferase (342 aa).

5-phospho-alpha-D-ribose 1-diphosphate is bound by residues glycine 81, 84–85, 91–94, 109–117, and serine 121; these read GD, NVSS, and KHGNRGVSS. Position 81 (glycine 81) interacts with anthranilate. Position 93 (serine 93) interacts with Mg(2+). Asparagine 112 is a binding site for anthranilate. An anthranilate-binding site is contributed by arginine 167. Aspartate 226 and glutamate 227 together coordinate Mg(2+).

The protein belongs to the anthranilate phosphoribosyltransferase family. In terms of assembly, homodimer. Mg(2+) serves as cofactor.

It catalyses the reaction N-(5-phospho-beta-D-ribosyl)anthranilate + diphosphate = 5-phospho-alpha-D-ribose 1-diphosphate + anthranilate. Its pathway is amino-acid biosynthesis; L-tryptophan biosynthesis; L-tryptophan from chorismate: step 2/5. In terms of biological role, catalyzes the transfer of the phosphoribosyl group of 5-phosphorylribose-1-pyrophosphate (PRPP) to anthranilate to yield N-(5'-phosphoribosyl)-anthranilate (PRA). The sequence is that of Anthranilate phosphoribosyltransferase from Marinobacter nauticus (strain ATCC 700491 / DSM 11845 / VT8) (Marinobacter aquaeolei).